A 362-amino-acid polypeptide reads, in one-letter code: Golgi-resident adenosine 3',5'-bisphosphate 3'-phosphatase (362 aa).

Residue M1 is modified to N-acetylmethionine. Residues 1 to 12 (MAPMGIRLSPLG) lie on the Cytoplasmic side of the membrane. The helical transmembrane segment at 13 to 33 (VAVFCLLGLGVLYHLYSGFLA) threads the bilayer. Residues 34–362 (GRFSLFGLGG…LPDLEKTGHK (329 aa)) lie on the Lumenal side of the membrane. Positions 88–109 (RESNVLHEKSKGKTREGADDKM) are disordered. The active-site Proton acceptor is the D113. Residues E136, D177, L179, and D180 each coordinate Mg(2+). The active-site Proton acceptor is the T182. AMP contacts are provided by S245 and H248. N262 carries N-linked (GlcNAc...) asparagine glycosylation. AMP contacts are provided by G271 and K275. D303 is a binding site for Mg(2+).

This sequence belongs to the inositol monophosphatase superfamily. It depends on Mg(2+) as a cofactor. Post-translationally, contains N-linked glycan resistant to endoglycosydase H.

It localises to the golgi apparatus. The protein resides in the trans-Golgi network membrane. It carries out the reaction adenosine 3',5'-bisphosphate + H2O = AMP + phosphate. It functions in the pathway sulfur metabolism. With respect to regulation, strongly inhibited by lithium. Its function is as follows. Exhibits 3'-nucleotidase activity toward adenosine 3',5'-bisphosphate (PAP), namely hydrolyzes adenosine 3',5'-bisphosphate into adenosine 5'-monophosphate (AMP) and a phosphate. May play a role in the formation of skeletal elements derived through endochondral ossification, possibly by clearing adenosine 3',5'-bisphosphate produced by Golgi sulfotransferases during glycosaminoglycan sulfation. Has no activity toward 3'-phosphoadenosine 5'-phosphosulfate (PAPS) or inositol phosphate (IP) substrates including I(1)P, I(1,4)P2, I(1,3,4)P3, I(1,4,5)P3 and I(1,3,4,5)P4. The chain is Golgi-resident adenosine 3',5'-bisphosphate 3'-phosphatase (BPNT2) from Bos taurus (Bovine).